Consider the following 376-residue polypeptide: GDSL esterase/lipase 2 (376 aa).

An N-terminal signal peptide occupies residues 1-25 (MENSRSTLIIFFAYTTIILIGSINC). N36 carries N-linked (GlcNAc...) asparagine glycosylation. S46 (nucleophile) is an active-site residue. N-linked (GlcNAc...) asparagine glycosylation is found at N186 and N205. Active-site residues include D340 and H343. N-linked (GlcNAc...) asparagine glycosylation occurs at N362.

The protein belongs to the 'GDSL' lipolytic enzyme family. In terms of tissue distribution, expressed seedlings, roots and stems.

Its subcellular location is the secreted. Functionally, involved in the resistance to the necrotropic bacteria Erwinia carotovora, probably via negative regulation of auxin signaling. Possesses lipase and antimicrobial activities, inhibiting germination of fungal spores (e.g. Alternaria brassicicola). This is GDSL esterase/lipase 2 (GLIP2) from Arabidopsis thaliana (Mouse-ear cress).